Consider the following 291-residue polypeptide: Dihydroorotate dehydrogenase B (NAD(+)), catalytic subunit (291 aa).

FMN contacts are provided by residues serine 17 and 42-43 (KT). Residues lysine 42, 67–71 (NAIGL), and asparagine 118 contribute to the substrate site. Residue asparagine 118 participates in FMN binding. Serine 121 acts as the Nucleophile in catalysis. Lysine 153 and isoleucine 178 together coordinate FMN. Position 179–180 (179–180 (NT)) interacts with substrate. Residues glycine 204, 230–231 (GG), and 252–253 (GT) each bind FMN.

The protein belongs to the dihydroorotate dehydrogenase family. Type 1 subfamily. In terms of assembly, heterotetramer of 2 PyrK and 2 PyrD type B subunits. It depends on FMN as a cofactor.

It is found in the cytoplasm. It catalyses the reaction (S)-dihydroorotate + NAD(+) = orotate + NADH + H(+). It participates in pyrimidine metabolism; UMP biosynthesis via de novo pathway; orotate from (S)-dihydroorotate (NAD(+) route): step 1/1. Its function is as follows. Catalyzes the conversion of dihydroorotate to orotate with NAD(+) as electron acceptor. This chain is Dihydroorotate dehydrogenase B (NAD(+)), catalytic subunit (pyrD), found in Sulfolobus acidocaldarius (strain ATCC 33909 / DSM 639 / JCM 8929 / NBRC 15157 / NCIMB 11770).